The following is a 41-amino-acid chain: Large ribosomal subunit protein bL36 (41 aa).

Belongs to the bacterial ribosomal protein bL36 family.

The polypeptide is Large ribosomal subunit protein bL36 (Ruegeria sp. (strain TM1040) (Silicibacter sp.)).